The following is a 1246-amino-acid chain: DNA-directed RNA polymerase subunit beta (1246 aa).

Residues 1171–1246 form a disordered region; sequence IDDDAGEMSL…EFDGYNDFKA (76 aa). Acidic residues-rich tracts occupy residues 1202-1223 and 1230-1240; these read DEEE…EDFE and EYAEDDDEFDG.

It belongs to the RNA polymerase beta chain family. The RNAP catalytic core consists of 2 alpha, 1 beta, 1 beta' and 1 omega subunit. When a sigma factor is associated with the core the holoenzyme is formed, which can initiate transcription.

The enzyme catalyses RNA(n) + a ribonucleoside 5'-triphosphate = RNA(n+1) + diphosphate. Its function is as follows. DNA-dependent RNA polymerase catalyzes the transcription of DNA into RNA using the four ribonucleoside triphosphates as substrates. The sequence is that of DNA-directed RNA polymerase subunit beta from Alkaliphilus metalliredigens (strain QYMF).